The chain runs to 454 residues: Laccase-3 (454 aa).

2 consecutive Plastocyanin-like domains span residues 1–95 (PGPT…GPAT) and 101–252 (DLGV…YSGA). N-linked (GlcNAc...) asparagine glycosylation is present at Asn24. Cu cation is bound by residues His29, His31, His73, and His75. N-linked (GlcNAc...) asparagine glycans are attached at residues Asn138, Asn169, Asn218, Asn314, and Asn334. Positions 319–454 (DVDWKKPILQ…SEGLAVQFQG (136 aa)) constitute a Plastocyanin-like 3 domain. Cu cation-binding residues include His375, His378, and His380. Asn395 is a glycosylation site (N-linked (GlcNAc...) asparagine). His437, Cys438, His439, and His443 together coordinate Cu cation.

Belongs to the multicopper oxidase family. Cu cation serves as cofactor.

It is found in the secreted. The catalysed reaction is 4 hydroquinone + O2 = 4 benzosemiquinone + 2 H2O. In terms of biological role, lignin degradation and detoxification of lignin-derived products. This Botryotinia fuckeliana (Noble rot fungus) protein is Laccase-3 (lcc3).